A 1114-amino-acid chain; its full sequence is Proto-oncogene tyrosine-protein kinase receptor Ret (1114 aa).

Positions 1-28 (MAKATSGAAGLRLLLLLLLPLLGKVALG) are cleaved as a signal peptide. Residues 29–153 (LYFSRDAYWE…RVYFSFFNTS (125 aa)) are cadherin-like region 1 (CLD1). The Extracellular portion of the chain corresponds to 29-635 (LYFSRDAYWE…QDPLCDELCR (607 aa)). The N-linked (GlcNAc...) asparagine glycan is linked to Asn-98. Residues Cys-137 and Cys-142 are joined by a disulfide bond. Asn-151 carries N-linked (GlcNAc...) asparagine glycosylation. Disulfide bonds link Cys-157/Cys-197 and Cys-166/Cys-243. The Cadherin domain occupies 168–272 (PETRPSFRIR…YDEDDSAPTF (105 aa)). The Ca(2+) site is built by Glu-178 and Asn-179. A glycan (N-linked (GlcNAc...) asparagine) is linked at Asn-199. Ca(2+) is bound by residues Asp-230, Glu-232, Asp-264, Glu-265, Asp-266, Asp-267, Ser-268, Asp-300, and Asp-302. The cadherin-like region 3 (CLD3) stretch occupies residues 265–379 (EDDSAPTFPA…MQLAVLVNDS (115 aa)). N-linked (GlcNAc...) asparagine glycosylation is found at Asn-336, Asn-343, Asn-361, Asn-367, and Asn-377. Asp-378 contacts Ca(2+). Asn-394 is a glycosylation site (N-linked (GlcNAc...) asparagine). The interval 405–506 (PSTYSLSVSR…QAQLLVTVEG (102 aa)) is cadherin-like region 4 (CLD4). A disulfide bridge links Cys-426 with Cys-430. N-linked (GlcNAc...) asparagine glycans are attached at residues Asn-448 and Asn-468. Intrachain disulfides connect Cys-449–Cys-478, Cys-515–Cys-531, Cys-519–Cys-541, and Cys-528–Cys-558. N-linked (GlcNAc...) asparagine glycosylation occurs at Asn-554. 6 residues coordinate Ca(2+): Thr-564, Cys-565, Asp-567, His-569, Glu-574, and Asp-584. Intrachain disulfides connect Cys-565/Cys-581, Cys-570/Cys-585, Cys-609/Cys-620, Cys-611/Cys-618, and Cys-630/Cys-634. Residues 636–657 (TVIAAAVLFSFIVSVLLSAFCI) traverse the membrane as a helical segment. Residues 658 to 1114 (HCYHKFAHKP…AAKLMDTFDS (457 aa)) lie on the Cytoplasmic side of the membrane. Tyr-687 carries the post-translational modification Phosphotyrosine; by autocatalysis. O-linked (GlcNAc) serine glycosylation occurs at Ser-688. Phosphoserine is present on Ser-696. In terms of domain architecture, Protein kinase spans 724–1016 (LVLGKTLGEG…KMMVKRRDYL (293 aa)). ATP-binding positions include 730–738 (LGEGEFGKV) and Lys-758. 805-807 (EYA) serves as a coordination point for semaxanib. Residues Tyr-806, Tyr-809, and Tyr-826 each carry the phosphotyrosine; by autocatalysis modification. Residue Asp-874 is the Proton acceptor of the active site. Residues Tyr-900, Tyr-905, Tyr-981, Tyr-1015, Tyr-1029, Tyr-1062, Tyr-1090, and Tyr-1096 each carry the phosphotyrosine; by autocatalysis modification.

It belongs to the protein kinase superfamily. Tyr protein kinase family. Phosphorylated form interacts with the PBT domain of DOK2, DOK4 and DOK5. The phosphorylated form interacts with PLCG1 and GRB7. Interacts (not phosphorylated) with PTK2/FAK1 (via FERM domain). Extracellular cell-membrane anchored RET cadherin fragments form complex in neurons with reduced trophic status, preferentially at the contact sites between somas. Interacts with AIP in the pituitary gland; this interaction prevents the formation of the AIP-survivin complex. Interacts (inactive) with CBLC and CD2AP; dissociates upon activation by GDNF which increases CBLC:CD2AP interaction. It depends on Ca(2+) as a cofactor. Post-translationally, autophosphorylated on C-terminal tyrosine residues upon ligand stimulation. In terms of processing, proteolytically cleaved by caspase-3. The soluble RET kinase fragment is able to induce cell death. The extracellular cell-membrane anchored RET cadherin fragment accelerates cell adhesion in sympathetic neurons.

The protein localises to the cell membrane. It is found in the endosome membrane. The catalysed reaction is L-tyrosyl-[protein] + ATP = O-phospho-L-tyrosyl-[protein] + ADP + H(+). Repressed by 4-(3-hydroxyanilino)-quinolines derivatives, indolin-2-one-derivatives, 2-(alkylsulfanyl)-4-(3-thienyl) nicotinonitrile analogs, 3- and 4-substituted beta-carbolin-1-ones, vandetanib, motesanib, sorafenib (BAY 43-9006), cabozantinib (XL184), lenvatinib, sunitinib, nintedanib, and withaferin A (WA). Inactivation by sorafenib both reduces kinase activity and promotes lysosomal degradation. Functionally, receptor tyrosine-protein kinase involved in numerous cellular mechanisms including cell proliferation, neuronal navigation, cell migration, and cell differentiation in response to glia cell line-derived growth family factors (GDNF, NRTN, ARTN, PSPN and GDF15). In contrast to most receptor tyrosine kinases, RET requires not only its cognate ligands but also coreceptors, for activation. GDNF ligands (GDNF, NRTN, ARTN, PSPN and GDF15) first bind their corresponding GDNFR coreceptors (GFRA1, GFRA2, GFRA3, GFRA4 and GFRAL, respectively), triggering RET autophosphorylation and activation, leading to activation of downstream signaling pathways, including the MAPK- and AKT-signaling pathways. Acts as a dependence receptor via the GDNF-GFRA1 signaling: in the presence of the ligand GDNF in somatotrophs within pituitary, promotes survival and down regulates growth hormone (GH) production, but triggers apoptosis in absence of GDNF. Required for the molecular mechanisms orchestration during intestine organogenesis via the ARTN-GFRA3 signaling: involved in the development of enteric nervous system and renal organogenesis during embryonic life, and promotes the formation of Peyer's patch-like structures, a major component of the gut-associated lymphoid tissue. Mediates, through interaction with GDF15-receptor GFRAL, GDF15-induced cell-signaling in the brainstem which triggers an aversive response, characterized by nausea, vomiting, and/or loss of appetite in response to various stresses. Modulates cell adhesion via its cleavage by caspase in sympathetic neurons and mediates cell migration in an integrin (e.g. ITGB1 and ITGB3)-dependent manner. Also active in the absence of ligand, triggering apoptosis through a mechanism that requires receptor intracellular caspase cleavage. Triggers the differentiation of rapidly adapting (RA) mechanoreceptors. Involved in the development of the neural crest. Regulates nociceptor survival and size. Phosphorylates PTK2/FAK1. Its function is as follows. Isoform 1 in complex with GFRAL induces higher activation of MAPK-signaling pathway than isoform 2 in complex with GFRAL. This Homo sapiens (Human) protein is Proto-oncogene tyrosine-protein kinase receptor Ret.